The chain runs to 630 residues: Probable potassium transport system protein Kup 2 (630 aa).

The next 12 helical transmembrane spans lie at 17-37, 56-76, 108-128, 145-165, 176-196, 214-234, 255-275, 293-313, 345-365, 375-395, 402-422, and 427-447; these read FWALTLGGVGVVFGDIGTSPL, VIVLGVLSLILWSLFIVVTAK, VFLMSLGVIGASMFIGDSMIT, PALEHYVVPLTVGILVVLFAF, AFGPVMIVWFSTLAVMGLIHI, FMLSHGMVGLVTIGAVFLAVT, WLFFVLPSLLINYFGQGALVL, FLVPLIVLATAATVIASQAVI, IYLPRVNMLLLIGVLMLVLLF, YGIAVSTTMVADGVMGFVVIW, PAAAAALIFPFVAVDAIFFSA, and LLEGAWVPLLFGLLMATLIWV.

The protein belongs to the HAK/KUP transporter (TC 2.A.72) family.

The protein resides in the cell inner membrane. It carries out the reaction K(+)(in) + H(+)(in) = K(+)(out) + H(+)(out). Transport of potassium into the cell. Likely operates as a K(+):H(+) symporter. The protein is Probable potassium transport system protein Kup 2 of Rhodopseudomonas palustris (strain BisB18).